A 793-amino-acid polypeptide reads, in one-letter code: von Willebrand factor A domain-containing protein 5A (793 aa).

A VIT domain is found at 1–131; sequence MEHHCGLITS…KVAVTLRYVQ (131 aa). The VWFA domain occupies 281–469; that stretch reads EFVFLMDRSG…FALQCAVDNI (189 aa). Tyr622 carries the phosphotyrosine modification.

May play a role in tumorigenesis as a tumor suppressor. Altered expression of this protein and disruption of the molecular pathway it is involved in may contribute directly to or modify tumorigenesis. The polypeptide is von Willebrand factor A domain-containing protein 5A (Vwa5a) (Mus musculus (Mouse)).